Reading from the N-terminus, the 353-residue chain is Guanine nucleotide-binding protein alpha-1 subunit (353 aa).

Gly2 carries the N-myristoyl glycine lipid modification. Residue Cys3 is the site of S-palmitoyl cysteine attachment. The region spanning 32 to 353 (NEIKMLLLGA…QVNLRDCGLL (322 aa)) is the G-alpha domain. The G1 motif stretch occupies residues 35-48 (KMLLLGAGESGKST). GTP-binding residues include Glu43, Ser44, Gly45, Lys46, Ser47, Thr48, Asp150, Leu175, Thr181, Gly203, Asn269, Lys270, Asp272, and Ala325. Residue Ser47 participates in Mg(2+) binding. The segment at 173 to 181 (DVLRSRVKT) is G2 motif. Thr181 is a Mg(2+) binding site. The G3 motif stretch occupies residues 196–205 (YKLFDVGGQR). Positions 265–272 (ILFLNKID) are G4 motif. Positions 323 to 328 (TCATDT) are G5 motif.

It belongs to the G-alpha family. As to quaternary structure, g proteins are composed of 3 units; alpha, beta and gamma. The alpha chain contains the guanine nucleotide binding site. Requires Mg(2+) as cofactor.

In terms of biological role, guanine nucleotide-binding proteins (G proteins) are involved as modulators or transducers in various transmembrane signaling systems. The sequence is that of Guanine nucleotide-binding protein alpha-1 subunit (GPA1) from Mycosarcoma maydis (Corn smut fungus).